The following is a 2225-amino-acid chain: Multifunctional protein CAD (2225 aa).

Position 2 is an N-acetylalanine (Ala-2). Positions 2–365 are GATase (Glutamine amidotransferase); that stretch reads AALVLEDGSV…TVREAVAGNP (364 aa). Residues Ser-44, Gly-222, and Gly-224 each coordinate L-glutamine. The 187-residue stretch at 177 to 363 folds into the Glutamine amidotransferase type-1 domain; that stretch reads RICALDCGLK…LETVREAVAG (187 aa). The active-site Nucleophile; for GATase activity is the Cys-252. L-glutamine-binding residues include Leu-253, Gln-256, Asn-294, Gly-296, and Phe-297. Active-site for GATase activity residues include His-336 and Glu-338. The tract at residues 366-394 is linker; that stretch reads GGQTVKERLVQRLCPPGLLIPGSGLPPPR. Residues 395-933 form a CPSase A region; it reads KVLILGSGGL…NTHDLDFRTP (539 aa). Residues 395-1455 form a CPSase (Carbamoyl phosphate synthase) region; the sequence is KVLILGSGGL…APPLKVHVDC (1061 aa). Residue Thr-456 is modified to Phosphothreonine; by MAPK1. Residues Arg-515, Arg-555, Gly-561, Gly-562, Lys-592, Glu-599, Gly-625, Ile-626, His-627, Gln-668, and Glu-682 each contribute to the ATP site. Residues 519-711 form the ATP-grasp 1 domain; sequence AARMAEIGEH…LAYVAAKLAL (193 aa). Mg(2+)-binding residues include Gln-668, Glu-682, and Asn-684. Residues Gln-668, Glu-682, and Asn-684 each coordinate Mn(2+). Lys-747 carries the N6-acetyllysine modification. The segment at 934-1455 is CPSase B; it reads HVLVLGSGVY…APPLKVHVDC (522 aa). Ser-1038 bears the Phosphoserine mark. The ATP-grasp 2 domain occupies 1052-1243; that stretch reads SRLLDTIGIS…LVALATRIIM (192 aa). 10 residues coordinate ATP: Arg-1088, Lys-1127, Ile-1129, Glu-1134, Gly-1159, Val-1160, His-1161, Ser-1162, Gln-1202, and Glu-1214. Mg(2+)-binding residues include Gln-1202, Glu-1214, and Asn-1216. Gln-1202, Glu-1214, and Asn-1216 together coordinate Mn(2+). Residues 1308–1462 form the MGS-like domain; that stretch reads FKIPKKNILL…VDCMTSQKLV (155 aa). A Phosphoserine; by PKA modification is found at Ser-1406. At Lys-1411 the chain carries N6-acetyllysine. A DHOase (dihydroorotase) region spans residues 1456 to 1788; that stretch reads MTSQKLVRLP…VKGTIRRVVL (333 aa). 2 residues coordinate Zn(2+): His-1471 and His-1473. The (S)-dihydroorotate site is built by Arg-1475 and Asn-1505. The Zn(2+) site is built by Lys-1556, His-1590, Cys-1613, His-1614, and Glu-1637. Lys-1556 carries the post-translational modification N6-carboxylysine. Arg-1661 contacts (S)-dihydroorotate. Asp-1686 is a Zn(2+) binding site. Asp-1686 serves as the catalytic For DHOase activity. Positions 1690 and 1702 each coordinate (S)-dihydroorotate. The tract at residues 1789 to 1917 is linker; sequence RGEVAYIDGQ…GLLHPQTSPL (129 aa). Positions 1813 to 1911 are disordered; that stretch reads PQGAVPQPPP…QNLGSSGLLH (99 aa). Residues 1825 to 1834 are compositionally biased toward low complexity; the sequence is PATTEITTTP. The residue at position 1859 (Ser-1859) is a Phosphoserine; by RPS6KB1 and PKA. A compositionally biased stretch (basic and acidic residues) spans 1866-1878; it reads EEPKEKPSRKVVE. Ser-1873 is modified (phosphoserine; by PKC; in vitro). Phosphothreonine is present on Thr-1884. The segment covering 1899–1911 has biased composition (polar residues); the sequence is ASPQNLGSSGLLH. Phosphoserine occurs at positions 1900 and 1938. Residues 1918-2225 are ATCase (Aspartate transcarbamylase); the sequence is LHSLVGQHIL…ALLATVLGRF (308 aa). Residues Arg-1975 and Thr-1976 each contribute to the carbamoyl phosphate site. Lys-2003 is an L-aspartate binding site. Residues Arg-2024, His-2052, and Gln-2055 each coordinate carbamoyl phosphate. Residues Arg-2085 and Arg-2146 each coordinate L-aspartate. Carbamoyl phosphate contacts are provided by Met-2185 and Pro-2186.

This sequence in the N-terminal section; belongs to the CarA family. The protein in the 2nd section; belongs to the CarB family. In the 3rd section; belongs to the metallo-dependent hydrolases superfamily. DHOase family. CAD subfamily. It in the C-terminal section; belongs to the aspartate/ornithine carbamoyltransferase superfamily. ATCase family. As to quaternary structure, homohexamer. Interacts with CIPC. Requires Zn(2+) as cofactor. Mg(2+) is required as a cofactor. The cofactor is Mn(2+). Post-translationally, activated by MAP kinase (Erk1/2) phosphorylation just prior to the S phase of the cell cycle, when the demand for pyrimidine nucleotides is greatest, and down-regulated as the cells emerge from S phase by protein kinase A (PKA) phosphorylation. Phosphorylation at Ser-1859 by RPS6KB1 downstream of MTOR promotes oligomerization and stimulates dihydroorotase activity. Phosphorylation at Ser-1406 reduces sensitivity to feedback inhibition by UTP.

The protein resides in the cytoplasm. It localises to the nucleus. It carries out the reaction hydrogencarbonate + L-glutamine + 2 ATP + H2O = carbamoyl phosphate + L-glutamate + 2 ADP + phosphate + 2 H(+). The catalysed reaction is L-glutamine + H2O = L-glutamate + NH4(+). It catalyses the reaction hydrogencarbonate + NH4(+) + 2 ATP = carbamoyl phosphate + 2 ADP + phosphate + 2 H(+). The enzyme catalyses carbamoyl phosphate + L-aspartate = N-carbamoyl-L-aspartate + phosphate + H(+). It carries out the reaction (S)-dihydroorotate + H2O = N-carbamoyl-L-aspartate + H(+). It participates in pyrimidine metabolism; UMP biosynthesis via de novo pathway; (S)-dihydroorotate from bicarbonate: step 1/3. The protein operates within pyrimidine metabolism; UMP biosynthesis via de novo pathway; (S)-dihydroorotate from bicarbonate: step 2/3. It functions in the pathway pyrimidine metabolism; UMP biosynthesis via de novo pathway; (S)-dihydroorotate from bicarbonate: step 3/3. With respect to regulation, allosterically regulated and controlled by phosphorylation. 5-phosphoribose 1-diphosphate (PRPP) is an activator while UMP and UTP are inhibitors of the CPSase reaction. Its function is as follows. Multifunctional protein that encodes the first 3 enzymatic activities of the de novo pyrimidine pathway: carbamoylphosphate synthetase (CPSase; EC 6.3.5.5), aspartate transcarbamylase (ATCase; EC 2.1.3.2) and dihydroorotase (DHOase; EC 3.5.2.3). The CPSase-function is accomplished in 2 steps, by a glutamine-dependent amidotransferase activity (GATase) that binds and cleaves glutamine to produce ammonia, followed by an ammonium-dependent carbamoyl phosphate synthetase, which reacts with the ammonia, hydrogencarbonate and ATP to form carbamoyl phosphate. The endogenously produced carbamoyl phosphate is sequestered and channeled to the ATCase active site. ATCase then catalyzes the formation of carbamoyl-L-aspartate from L-aspartate and carbamoyl phosphate. In the last step, DHOase catalyzes the cyclization of carbamoyl aspartate to dihydroorotate. This chain is Multifunctional protein CAD (CAD), found in Mesocricetus auratus (Golden hamster).